Consider the following 587-residue polypeptide: Urease subunit alpha (587 aa).

Residues 134 to 572 (GGIDTHVHFI…LPLAQRYLYT (439 aa)) enclose the Urease domain. Ni(2+) is bound by residues H139, H141, and K222. An N6-carboxylysine modification is found at K222. H224 provides a ligand contact to substrate. Positions 251 and 277 each coordinate Ni(2+). The Proton donor role is filled by H325. D365 lines the Ni(2+) pocket.

Belongs to the metallo-dependent hydrolases superfamily. Urease alpha subunit family. In terms of assembly, heterotrimer of UreA (gamma), UreB (beta) and UreC (alpha) subunits. Three heterotrimers associate to form the active enzyme. The cofactor is Ni cation. Carboxylation allows a single lysine to coordinate two nickel ions.

It is found in the cytoplasm. It carries out the reaction urea + 2 H2O + H(+) = hydrogencarbonate + 2 NH4(+). Its pathway is nitrogen metabolism; urea degradation; CO(2) and NH(3) from urea (urease route): step 1/1. The sequence is that of Urease subunit alpha from Clostridium perfringens.